The primary structure comprises 182 residues: Ribosome maturation factor RimM (182 aa).

A PRC barrel domain is found at 103–182 (EDDYYWKDLM…RVEVDWDPGF (80 aa)).

This sequence belongs to the RimM family. Binds ribosomal protein uS19.

It localises to the cytoplasm. An accessory protein needed during the final step in the assembly of 30S ribosomal subunit, possibly for assembly of the head region. Essential for efficient processing of 16S rRNA. May be needed both before and after RbfA during the maturation of 16S rRNA. It has affinity for free ribosomal 30S subunits but not for 70S ribosomes. The polypeptide is Ribosome maturation factor RimM (Yersinia enterocolitica serotype O:8 / biotype 1B (strain NCTC 13174 / 8081)).